Here is a 264-residue protein sequence, read N- to C-terminus: Phosphatidylinositol transfer protein 1 (264 aa).

A disordered region spans residues 151-174 (NYKETEDPTKIRSEKANRGPLEEE). A coiled-coil region spans residues 238 to 264 (VRAFELKTKEDLKKKLEEKDENKAAEK).

This sequence belongs to the PtdIns transfer protein family. PI transfer class I subfamily. In terms of processing, phosphorylated in response to activation of rasG.

Its subcellular location is the cytoplasm. It localises to the golgi apparatus. Catalyzes the transfer of PtdIns and phosphatidylcholine between membranes. The polypeptide is Phosphatidylinositol transfer protein 1 (pitA) (Dictyostelium discoideum (Social amoeba)).